We begin with the raw amino-acid sequence, 435 residues long: MIDQNLLRTNLDDVANALKLKRNFILDVNQVKALEEQRKTLQVTTETLQAERNARSKNIGAAKARGENISQLLAEVDTMGNQLEIAKTELDKVQSEIRELLLTIPNLPAEEVPLGKDDSQNKEILRWGTPRQFDFEIKDHVTLGENLKGIDFPTGVKLTASRFVVMKDKIARLHRALAQFMLDLHSEQHGYMEVNVPLLVNHDTLYGTGQLPKFGEDLFHTQPLTGQDPNEVQRPYGLIPTAEVPLTNLVRDEIVDEDSLPIKLVAHTPCFRAEAGSYGRDTRGLIRMHQFEKVELVQIVAPEKSMEALEELTGQAEKILQLLHLPYRKVLLCTGDMGFGSAKTYDLEVWLPAQNTYREISSCSNMWDFQARRMSARCKAKGDKKTRLVHTLNGSGLAVGRTLVAVLENYQNADGSITIPEVLRPYMAGQEAITG.

Residue 241–243 (TAE) coordinates L-serine. Residue 272 to 274 (RAE) participates in ATP binding. Position 295 (E295) interacts with L-serine. 359-362 (EISS) provides a ligand contact to ATP. S395 is an L-serine binding site.

It belongs to the class-II aminoacyl-tRNA synthetase family. Type-1 seryl-tRNA synthetase subfamily. As to quaternary structure, homodimer. The tRNA molecule binds across the dimer.

Its subcellular location is the cytoplasm. It carries out the reaction tRNA(Ser) + L-serine + ATP = L-seryl-tRNA(Ser) + AMP + diphosphate + H(+). The enzyme catalyses tRNA(Sec) + L-serine + ATP = L-seryl-tRNA(Sec) + AMP + diphosphate + H(+). The protein operates within aminoacyl-tRNA biosynthesis; selenocysteinyl-tRNA(Sec) biosynthesis; L-seryl-tRNA(Sec) from L-serine and tRNA(Sec): step 1/1. Its function is as follows. Catalyzes the attachment of serine to tRNA(Ser). Is also able to aminoacylate tRNA(Sec) with serine, to form the misacylated tRNA L-seryl-tRNA(Sec), which will be further converted into selenocysteinyl-tRNA(Sec). The polypeptide is Serine--tRNA ligase (Haemophilus ducreyi (strain 35000HP / ATCC 700724)).